Here is a 396-residue protein sequence, read N- to C-terminus: Elongation factor Tu (396 aa).

One can recognise a tr-type G domain in the interval 10 to 205 (KPHVNIGTIG…ACDESIPDPE (196 aa)). A G1 region spans residues 19 to 26 (GHVDHGKT). Residue 19–26 (GHVDHGKT) coordinates GTP. A Mg(2+)-binding site is contributed by T26. Positions 62 to 66 (GITIN) are G2. The tract at residues 83–86 (DAPG) is G3. GTP-binding positions include 83 to 87 (DAPGH) and 138 to 141 (NKCD). Residues 138–141 (NKCD) form a G4 region. Residues 175–177 (SAL) are G5.

The protein belongs to the TRAFAC class translation factor GTPase superfamily. Classic translation factor GTPase family. EF-Tu/EF-1A subfamily. In terms of assembly, monomer.

The protein resides in the cytoplasm. It carries out the reaction GTP + H2O = GDP + phosphate + H(+). Its function is as follows. GTP hydrolase that promotes the GTP-dependent binding of aminoacyl-tRNA to the A-site of ribosomes during protein biosynthesis. This chain is Elongation factor Tu, found in Corynebacterium jeikeium (strain K411).